Reading from the N-terminus, the 184-residue chain is Nutrient stress-induced DNA-binding protein (184 aa).

The protein belongs to the Dps family. As to quaternary structure, hexamer.

Its function is as follows. Involved in protection of chromosomal DNA from damage under nutrient-limited and oxidative stress conditions. Binds heme. The sequence is that of Nutrient stress-induced DNA-binding protein (dpsA) from Nostoc sp. (strain PCC 7120 / SAG 25.82 / UTEX 2576).